We begin with the raw amino-acid sequence, 155 residues long: Putative pre-16S rRNA nuclease (155 aa).

Residues 136–155 (DAERATSRPPGHPVEPRIGP) are disordered.

The protein belongs to the YqgF nuclease family.

The protein resides in the cytoplasm. Functionally, could be a nuclease involved in processing of the 5'-end of pre-16S rRNA. This is Putative pre-16S rRNA nuclease from Leifsonia xyli subsp. xyli (strain CTCB07).